Reading from the N-terminus, the 274-residue chain is Trypsin-1 (274 aa).

The N-terminal stretch at 1 to 18 is a signal peptide; sequence MSNKIAILLAVLVAVVAC. Residues 19-47 constitute a propeptide, activation peptide; the sequence is AEAQANQRHRLVRPSPSFSPRPRYAVGQR. One can recognise a Peptidase S1 domain in the interval 48–273; the sequence is IVGGFEIDVS…VRDWVRENSG (226 aa). Cysteines 73 and 89 form a disulfide. Catalysis depends on charge relay system residues His88 and Asp133. Intrachain disulfides connect Cys198/Cys214 and Cys225/Cys249. Residue Ser229 is the Charge relay system of the active site.

Belongs to the peptidase S1 family. Constitutively expressed at low level in the gut of adult females. Also expressed in the gut of male and female pupae.

The protein localises to the secreted. The enzyme catalyses Preferential cleavage: Arg-|-Xaa, Lys-|-Xaa.. Its function is as follows. Major function may be to aid in digestion of the blood meal. The sequence is that of Trypsin-1 (TRYP1) from Anopheles gambiae (African malaria mosquito).